A 27-amino-acid polypeptide reads, in one-letter code: Metallothionein-like protein CAP5 (27 aa).

Low complexity predominate over residues 1–18; the sequence is MAPCSCKSCGTSCAGSCT. The interval 1-27 is disordered; sequence MAPCSCKSCGTSCAGSCTSCSCGSCSH. The Cu(+) site is built by C4, C6, C9, C13, C20, C22, and C25.

The protein belongs to the metallothionein superfamily. Type 8 family.

The chain is Metallothionein-like protein CAP5 (CAP5) from Colletotrichum gloeosporioides (Anthracnose fungus).